Consider the following 855-residue polypeptide: Suppressor of tumorigenicity 14 protein (855 aa).

The interval 1-20 (MGSDRARKGGGGPKDFGAGL) is disordered. At 1-55 (MGSDRARKGGGGPKDFGAGLKYNSRHEKVNGLEEGVEFLPVNNVKKVEKHGPGRW) the chain is on the cytoplasmic side. Residues 56–76 (VVLAAVLIGLLLVLLGIGFLV) traverse the membrane as a helical; Signal-anchor for type II membrane protein segment. Residues 77 to 855 (WHLQYRDVRV…RDWIKENTGV (779 aa)) lie on the Extracellular side of the membrane. The region spanning 86–203 (VQKVFNGYMR…TSVVAFPTDS (118 aa)) is the SEA domain. Asn-109 carries N-linked (GlcNAc...) asparagine glycosylation. A disulfide bond links Cys-214 and Cys-244. 2 CUB domains span residues 214 to 334 (CSFG…FFQL) and 340 to 447 (CGGR…YLSY). N-linked (GlcNAc...) asparagine glycosylation is present at Asn-302. 15 cysteine pairs are disulfide-bonded: Cys-340/Cys-366, Cys-397/Cys-410, Cys-453/Cys-464, Cys-459/Cys-477, Cys-471/Cys-486, Cys-488/Cys-501, Cys-496/Cys-514, Cys-508/Cys-523, Cys-525/Cys-537, Cys-532/Cys-550, Cys-544/Cys-559, Cys-567/Cys-579, Cys-574/Cys-593, Cys-587/Cys-602, and Cys-641/Cys-657. 4 LDL-receptor class A domains span residues 452–487 (PCPGQFTCRTGRCIRKELRCDGWADCTDHSDELNCS), 487–524 (SCDAGHQFTCKNKFCKPLFWVCDSVNDCGDNSDEQGCS), 524–560 (SCPAQTFRCSNGKCLSKSQQCNGKDDCGDGSDEASCP), and 566–603 (TCTKHTYRCLNGLCLSKGNPECDGKEDCSDGSDEKDCD). Asn-485 carries an N-linked (GlcNAc...) asparagine glycan. The Peptidase S1 domain maps to 615 to 854 (VVGGTDADEG…FRDWIKENTG (240 aa)). Catalysis depends on charge relay system residues His-656 and Asp-711. Asn-772 carries an N-linked (GlcNAc...) asparagine glycan. Cystine bridges form between Cys-776-Cys-790 and Cys-801-Cys-830. Residue Ser-805 is the Charge relay system of the active site.

This sequence belongs to the peptidase S1 family. In terms of assembly, interacts with CDCP1. May interact with TMEFF1. Interacts with iripin-3, a serine protease inhibitor from Ixodes ricinus saliva. Interacts with iripin-1, a serine protease inhibitor from Ixodes ricinus saliva.

The protein localises to the membrane. It carries out the reaction Cleaves various synthetic substrates with Arg or Lys at the P1 position and prefers small side-chain amino acids, such as Ala and Gly, at the P2 position.. Functionally, exhibits trypsin-like activity as defined by cleavage of synthetic substrates with Arg or Lys as the P1 site. Involved in the terminal differentiation of keratinocytes through prostasin (PRSS8) activation and filaggrin (FLG) processing. Proteolytically cleaves and therefore activates TMPRSS13. This Homo sapiens (Human) protein is Suppressor of tumorigenicity 14 protein (ST14).